The primary structure comprises 367 residues: Apurinic-apyrimidinic endonuclease 1 (367 aa).

The Zn(2+) site is built by histidine 83, histidine 123, glutamate 158, aspartate 192, histidine 195, histidine 229, aspartate 242, histidine 244, and glutamate 274. Residues 312–367 (DTLQKLGAKSRKEQLDKFEVKQKKRAGGTKRKKATAEPSDNDILSQMTKKRKTKKE) are disordered. Over residues 321–332 (SRKEQLDKFEVK) the composition is skewed to basic and acidic residues. Residues 333–344 (QKKRAGGTKRKK) show a composition bias toward basic residues. Serine 356 bears the Phosphoserine mark.

This sequence belongs to the AP endonuclease 2 family. In terms of assembly, monomer. Requires Zn(2+) as cofactor.

It is found in the nucleus. Its function is as follows. DNA repair enzyme that cleaves apurinic/apyrimidinic (AP) sites and removes 3'-blocking groups present at single strand breaks of damaged DNA. APN1 accounts for &gt; 97% of both apurinic/apyrimidinic (AP) endonuclease and DNA 3'-repair diesterase activities. This Saccharomyces cerevisiae (strain ATCC 204508 / S288c) (Baker's yeast) protein is Apurinic-apyrimidinic endonuclease 1 (APN1).